The chain runs to 952 residues: RNA polymerase-associated protein RapA (952 aa).

The Helicase ATP-binding domain maps to Glu-164 to Asp-334. Asp-177–Thr-184 contacts ATP. A DEAH box motif is present at residues Asp-280–His-283. One can recognise a Helicase C-terminal domain in the interval Arg-492–Ile-668.

Belongs to the SNF2/RAD54 helicase family. RapA subfamily. As to quaternary structure, interacts with the RNAP. Has a higher affinity for the core RNAP than for the holoenzyme. Its ATPase activity is stimulated by binding to RNAP.

Functionally, transcription regulator that activates transcription by stimulating RNA polymerase (RNAP) recycling in case of stress conditions such as supercoiled DNA or high salt concentrations. Probably acts by releasing the RNAP, when it is trapped or immobilized on tightly supercoiled DNA. Does not activate transcription on linear DNA. Probably not involved in DNA repair. This Aliivibrio fischeri (strain ATCC 700601 / ES114) (Vibrio fischeri) protein is RNA polymerase-associated protein RapA.